A 101-amino-acid polypeptide reads, in one-letter code: Large ribosomal subunit protein uL24 (101 aa).

This sequence belongs to the universal ribosomal protein uL24 family. In terms of assembly, part of the 50S ribosomal subunit.

Functionally, one of two assembly initiator proteins, it binds directly to the 5'-end of the 23S rRNA, where it nucleates assembly of the 50S subunit. Its function is as follows. One of the proteins that surrounds the polypeptide exit tunnel on the outside of the subunit. This chain is Large ribosomal subunit protein uL24, found in Paracoccus denitrificans (strain Pd 1222).